Here is a 77-residue protein sequence, read N- to C-terminus: Small ribosomal subunit protein bS20 (77 aa).

It belongs to the bacterial ribosomal protein bS20 family.

Functionally, binds directly to 16S ribosomal RNA. The protein is Small ribosomal subunit protein bS20 of Lactococcus lactis subsp. cremoris (strain MG1363).